The following is a 650-amino-acid chain: Outer capsid protein VP4 (650 aa).

G2 carries the N-myristoyl glycine; by host lipid modification. N-linked (GlcNAc...) asparagine; by host glycosylation is found at N110, N407, and N493.

This sequence belongs to the aquareoviridae outer capsid VP4 protein family. As to quaternary structure, interacts with VP6 and VP7. Cleaved during the endosomal proteolytic disassembly of the outer capsid. In terms of processing, N-terminally myristoylated. This acylation is essential for the membrane fusion activity.

Its subcellular location is the virion. Interacts with VP7 to form the outer icosahedral capsid with an incomplete T=13 symmetry, about 80 nm in diameter, and consisting of 200 VP4-VP7 trimers. Myristoylated N-terminal peptide may be released in the endosome and involved in permeabilization and delivery of transcriptionally active viral particles into the host cell cytoplasm (Potential). The polypeptide is Outer capsid protein VP4 (S6) (Ctenopharyngodon idella (Grass carp)).